Consider the following 507-residue polypeptide: Probable circularly permuted 1,3-beta-glucanase P23A10.11c YJL171C (507 aa).

The signal sequence occupies residues 1-22; that stretch reads MIAKSFIASFLFLCFAFSGVKA. Residues 228–264 are compositionally biased toward low complexity; it reads AAPPDSASESTPASTSYASSTTSATSTSTTSGSSGSS. Positions 228 to 266 are disordered; that stretch reads AAPPDSASESTPASTSYASSTTSATSTSTTSGSSGSSDW. Positions 412–417 match the ExDxxE motif motif; sequence EFDIFE. Asn480 is a glycosylation site (N-linked (GlcNAc...) asparagine).

The protein belongs to the PGA52 family.

Its subcellular location is the secreted. It carries out the reaction Hydrolysis of (1-&gt;3)-beta-D-glucosidic linkages in (1-&gt;3)-beta-D-glucans.. Probable circularly permuted 1,3-beta-glucanase involved in cell wall modification through beta-1,3-glucan network alterations such as increased branching or remodeling. This chain is Probable circularly permuted 1,3-beta-glucanase P23A10.11c YJL171C, found in Schizosaccharomyces pombe (strain 972 / ATCC 24843) (Fission yeast).